Here is a 268-residue protein sequence, read N- to C-terminus: Ribosomal RNA small subunit methyltransferase A (268 aa).

Asn-19, Leu-21, Gly-46, Glu-67, Asp-92, and Asn-113 together coordinate S-adenosyl-L-methionine.

Belongs to the class I-like SAM-binding methyltransferase superfamily. rRNA adenine N(6)-methyltransferase family. RsmA subfamily.

The protein localises to the cytoplasm. The enzyme catalyses adenosine(1518)/adenosine(1519) in 16S rRNA + 4 S-adenosyl-L-methionine = N(6)-dimethyladenosine(1518)/N(6)-dimethyladenosine(1519) in 16S rRNA + 4 S-adenosyl-L-homocysteine + 4 H(+). In terms of biological role, specifically dimethylates two adjacent adenosines (A1518 and A1519) in the loop of a conserved hairpin near the 3'-end of 16S rRNA in the 30S particle. May play a critical role in biogenesis of 30S subunits. The polypeptide is Ribosomal RNA small subunit methyltransferase A (Tolumonas auensis (strain DSM 9187 / NBRC 110442 / TA 4)).